Reading from the N-terminus, the 358-residue chain is Peptide chain release factor 1 (358 aa).

Position 233 is an N5-methylglutamine (Gln-233).

Belongs to the prokaryotic/mitochondrial release factor family. Methylated by PrmC. Methylation increases the termination efficiency of RF1.

It localises to the cytoplasm. Functionally, peptide chain release factor 1 directs the termination of translation in response to the peptide chain termination codons UAG and UAA. The chain is Peptide chain release factor 1 from Listeria monocytogenes serovar 1/2a (strain ATCC BAA-679 / EGD-e).